Reading from the N-terminus, the 141-residue chain is DUF35 domain-containing scaffold protein (141 aa).

Zn(2+) contacts are provided by Cys30, Cys33, Cys44, and Cys47.

The protein belongs to the scaffold protein DUF35 family. In terms of assembly, interacts with acetoacetyl-CoA thiolase and HMG-CoA synthase (HMGCS) that catalyzes the first and second step in the mevalonate pathway, respectively.

Functionally, functions as a scaffold to connect the acetoacetyl-CoA thiolase and HMG-CoA synthase (HMGCS) dimers in the channeling thiolase/HMGCS complex, which allows for efficient coupling of the endergonic thiolase reaction with the exergonic HMGCS reaction. The chain is DUF35 domain-containing scaffold protein from Methanocaldococcus jannaschii (strain ATCC 43067 / DSM 2661 / JAL-1 / JCM 10045 / NBRC 100440) (Methanococcus jannaschii).